The primary structure comprises 95 residues: Protein ECS1 (95 aa).

Positions 1–27 (MASSIVSSMFLFLLLLLVFPHIDNVLG) are cleaved as a signal peptide.

As to expression, expressed in leaves, flowers and stems, but not in roots.

It is found in the secreted. Its subcellular location is the cell wall. Functionally, maybe involved in defense responses to X.campestris, but probably not a X.campestris pv. campestris race 750 (e.g. Xcc750) resistance gene; according to genetic data, linked to a locus influencing resistance to Xcc750. This chain is Protein ECS1, found in Arabidopsis thaliana (Mouse-ear cress).